The primary structure comprises 772 residues: DnaJ homolog subfamily C member 16 (772 aa).

Residues Met1 to Ala25 form the signal peptide. Over Leu26–Glu533 the chain is Cytoplasmic. The J domain occupies Asp29–Gly93. Positions Phe119 to Pro245 constitute a Thioredoxin domain. The chain crosses the membrane as a helical; Anchor for type IV membrane protein span at residues Met534–Val554. At Gln555 to Asp772 the chain is on the extracellular side. The interval Ser560 to Ser591 is disordered. Basic and acidic residues predominate over residues Asn561–Lys580. N-linked (GlcNAc...) asparagine glycosylation is present at Asn629.

It is found in the endoplasmic reticulum membrane. In terms of biological role, plays an important role in regulating the size of autophagosomes during the formation process. The sequence is that of DnaJ homolog subfamily C member 16 (Dnajc16) from Mus musculus (Mouse).